The chain runs to 197 residues: Holliday junction branch migration complex subunit RuvA (197 aa).

The interval 1 to 64 (MYEYIKGKYI…EDFIGVYGFL (64 aa)) is domain I. The segment at 65-144 (TKDELSMFKL…DILEEDDEQI (80 aa)) is domain II. The segment at 145–149 (INKVA) is flexible linker. The segment at 149–197 (ADDKKVLEAVAALVTLGYSEKEANKVINSCDKNNSLEQIIKEALKYLMK) is domain III.

Belongs to the RuvA family. Homotetramer. Forms an RuvA(8)-RuvB(12)-Holliday junction (HJ) complex. HJ DNA is sandwiched between 2 RuvA tetramers; dsDNA enters through RuvA and exits via RuvB. An RuvB hexamer assembles on each DNA strand where it exits the tetramer. Each RuvB hexamer is contacted by two RuvA subunits (via domain III) on 2 adjacent RuvB subunits; this complex drives branch migration. In the full resolvosome a probable DNA-RuvA(4)-RuvB(12)-RuvC(2) complex forms which resolves the HJ.

Its subcellular location is the cytoplasm. Its function is as follows. The RuvA-RuvB-RuvC complex processes Holliday junction (HJ) DNA during genetic recombination and DNA repair, while the RuvA-RuvB complex plays an important role in the rescue of blocked DNA replication forks via replication fork reversal (RFR). RuvA specifically binds to HJ cruciform DNA, conferring on it an open structure. The RuvB hexamer acts as an ATP-dependent pump, pulling dsDNA into and through the RuvAB complex. HJ branch migration allows RuvC to scan DNA until it finds its consensus sequence, where it cleaves and resolves the cruciform DNA. This is Holliday junction branch migration complex subunit RuvA from Clostridium botulinum (strain ATCC 19397 / Type A).